The chain runs to 202 residues: Matrix protein (202 aa).

The segment at 1–33 (MNILRKIVKNRKDEDTQKPSPASAPPDDDDLWL) is disordered. A PPXY motif motif is present at residues 35–38 (PPEY). The interval 115 to 151 (KLRRTLIFQWADSRGPLEGEELEHSQEITWDDDTEFV) is essential for glycoprotein binding.

The protein belongs to the lyssavirus matrix protein family. In terms of assembly, homomultimer. Interacts with nucleoprotein and with the cytoplasmic domain of glycoprotein. Interacts with host ATP6V1A; this interaction plays an important role in virion uncoating after viral entry.

The protein localises to the virion membrane. It localises to the host endomembrane system. The protein resides in the host cytoplasm. Functionally, plays a major role in assembly, budding and uncoating of virion after membrane fusion. Completely covers the ribonucleoprotein coil and keep it in condensed bullet-shaped form. Inhibits viral transcription and stimulates replication. Plays a major role in early induction of TRAIL-mediated apoptosis in infected neurons. Inhibits the integrated stress response (ISR) in the infected cell by blocking the formation of stress granules. This is Matrix protein (M) from Homo sapiens (Human).